Reading from the N-terminus, the 241-residue chain is Purine nucleoside phosphorylase DeoD-type 1 (241 aa).

Residue H5 participates in a purine D-ribonucleoside binding. Residues G21, R25, R44, and 88–91 (RVGS) contribute to the phosphate site. A purine D-ribonucleoside-binding positions include 180–182 (EME) and 204–205 (SD). D205 serves as the catalytic Proton donor.

It belongs to the PNP/UDP phosphorylase family. Homohexamer; trimer of homodimers.

It catalyses the reaction a purine D-ribonucleoside + phosphate = a purine nucleobase + alpha-D-ribose 1-phosphate. It carries out the reaction a purine 2'-deoxy-D-ribonucleoside + phosphate = a purine nucleobase + 2-deoxy-alpha-D-ribose 1-phosphate. Catalyzes the reversible phosphorolytic breakdown of the N-glycosidic bond in the beta-(deoxy)ribonucleoside molecules, with the formation of the corresponding free purine bases and pentose-1-phosphate. The chain is Purine nucleoside phosphorylase DeoD-type 1 from Vibrio cholerae serotype O1 (strain ATCC 39315 / El Tor Inaba N16961).